We begin with the raw amino-acid sequence, 95 residues long: Co-chaperonin GroES (95 aa).

Belongs to the GroES chaperonin family. As to quaternary structure, heptamer of 7 subunits arranged in a ring. Interacts with the chaperonin GroEL.

Its subcellular location is the cytoplasm. In terms of biological role, together with the chaperonin GroEL, plays an essential role in assisting protein folding. The GroEL-GroES system forms a nano-cage that allows encapsulation of the non-native substrate proteins and provides a physical environment optimized to promote and accelerate protein folding. GroES binds to the apical surface of the GroEL ring, thereby capping the opening of the GroEL channel. The protein is Co-chaperonin GroES of Clostridium botulinum (strain ATCC 19397 / Type A).